The chain runs to 239 residues: Probable transcriptional regulatory protein Tcr_1104 (239 aa).

It belongs to the TACO1 family.

It is found in the cytoplasm. This chain is Probable transcriptional regulatory protein Tcr_1104, found in Hydrogenovibrio crunogenus (strain DSM 25203 / XCL-2) (Thiomicrospira crunogena).